Consider the following 156-residue polypeptide: Ribonuclease pancreatic (156 aa).

Residues 1-28 (MALEKSLVRLLLLVLILLVLGWVQPSLG) form the signal peptide. Residues 33-43 (AKKFQRQHMDS) are compositionally biased toward basic and acidic residues. Positions 33 to 53 (AKKFQRQHMDSDSSPSSSSTY) are disordered. Lys35 and Arg38 together coordinate substrate. The Proton acceptor role is filled by His40. 4 disulfides stabilise this stretch: Cys54–Cys112, Cys68–Cys123, Cys86–Cys138, and Cys93–Cys100. Residue Asn62 is glycosylated (N-linked (GlcNAc...) asparagine; partial). Substrate contacts are provided by residues 69–73 (KPVNT) and Lys94. Asn104 carries an N-linked (GlcNAc...) asparagine glycan. Position 113 (Arg113) interacts with substrate. A glycan (N-linked (GlcNAc...) asparagine) is linked at Asn116. Residue His147 is the Proton donor of the active site.

It belongs to the pancreatic ribonuclease family. In terms of assembly, monomer. Interacts with and forms tight 1:1 complexes with RNH1. Dimerization of two such complexes may occur. Interaction with RNH1 inhibits this protein. N-linked glycans are of complex type. As to expression, pancreas and other tissues and body fluids (indicating it may have other physiological functions besides its role in digestion).

Its subcellular location is the secreted. The enzyme catalyses an [RNA] containing cytidine + H2O = an [RNA]-3'-cytidine-3'-phosphate + a 5'-hydroxy-ribonucleotide-3'-[RNA].. It catalyses the reaction an [RNA] containing uridine + H2O = an [RNA]-3'-uridine-3'-phosphate + a 5'-hydroxy-ribonucleotide-3'-[RNA].. Endonuclease that catalyzes the cleavage of RNA on the 3' side of pyrimidine nucleotides. Acts on single-stranded and double-stranded RNA. This chain is Ribonuclease pancreatic (RNASE1), found in Homo sapiens (Human).